Reading from the N-terminus, the 157-residue chain is 2-C-methyl-D-erythritol 2,4-cyclodiphosphate synthase (157 aa).

A divalent metal cation-binding residues include D8 and H10. 4-CDP-2-C-methyl-D-erythritol 2-phosphate-binding positions include 8–10 (DVH) and 34–35 (HS). An a divalent metal cation-binding site is contributed by H42. 4-CDP-2-C-methyl-D-erythritol 2-phosphate is bound by residues 56–58 (DIG), 61–65 (FPDTD), 100–106 (AQAPKMA), 132–135 (TTTE), F139, and R142.

It belongs to the IspF family. Homotrimer. The cofactor is a divalent metal cation.

It carries out the reaction 4-CDP-2-C-methyl-D-erythritol 2-phosphate = 2-C-methyl-D-erythritol 2,4-cyclic diphosphate + CMP. It participates in isoprenoid biosynthesis; isopentenyl diphosphate biosynthesis via DXP pathway; isopentenyl diphosphate from 1-deoxy-D-xylulose 5-phosphate: step 4/6. In terms of biological role, involved in the biosynthesis of isopentenyl diphosphate (IPP) and dimethylallyl diphosphate (DMAPP), two major building blocks of isoprenoid compounds. Catalyzes the conversion of 4-diphosphocytidyl-2-C-methyl-D-erythritol 2-phosphate (CDP-ME2P) to 2-C-methyl-D-erythritol 2,4-cyclodiphosphate (ME-CPP) with a corresponding release of cytidine 5-monophosphate (CMP). The protein is 2-C-methyl-D-erythritol 2,4-cyclodiphosphate synthase of Pseudomonas syringae pv. tomato (strain ATCC BAA-871 / DC3000).